We begin with the raw amino-acid sequence, 782 residues long: General transcription and DNA repair factor IIH helicase/translocase subunit XPB (782 aa).

Basic and acidic residues predominate over residues 1-11; that stretch reads MGKRDRADRDK. Disordered stretches follow at residues 1–51 and 218–241; these read MGKR…ESGT and SAIS…PQGK. The short motif at 6-18 is the Nuclear localization signal element; that stretch reads RADRDKKKSRKRH. Acidic residues predominate over residues 21-30; sequence DEEDDEEDAP. Over residues 218-236 the composition is skewed to polar residues; it reads SAISKTAESSGGPSTSRVT. The region spanning 327–488 is the Helicase ATP-binding domain; the sequence is MFGNGRARSG…DLNFLIGPKL (162 aa). An ATP-binding site is contributed by 340–347; the sequence is LPCGAGKS. Positions 441-444 match the DEVH box motif; it reads DEVH. In terms of domain architecture, Helicase C-terminal spans 542-702; that stretch reads RACQFLIKFH…LAGMEEEDLA (161 aa). The ATP site is built by arginine 642 and arginine 645. At serine 686 the chain carries Phosphoserine. Position 751 is a phosphoserine; by CK2 (serine 751).

This sequence belongs to the helicase family. RAD25/XPB subfamily. In terms of assembly, component of the 7-subunit TFIIH core complex composed of XPB/ERCC3, XPD/ERCC2, GTF2H1, GTF2H2, GTF2H3, GTF2H4 and GTF2H5, which is active in NER. The core complex associates with the 3-subunit CDK-activating kinase (CAK) module composed of CCNH/cyclin H, CDK7 and MNAT1 to form the 10-subunit holoenzyme (holo-TFIIH) active in transcription. Interacts with PUF60. Interacts with ATF7IP. Interacts with KAT2A; leading to KAT2A recruitment to promoters and acetylation of histones. Part of TBP-based Pol II pre-initiation complex (PIC), in which Pol II core assembles with general transcription factors and other specific initiation factors including GTF2E1, GTF2E2, GTF2F1, GTF2F2, TCEA1, ERCC2, ERCC3, GTF2H2, GTF2H3, GTF2H4, GTF2H5, GTF2A1, GTF2A2, GTF2B and TBP; this large multi-subunit PIC complex mediates DNA unwinding and targets Pol II core to the transcription start site where the first phosphodiester bond forms. (Microbial infection) Interacts with Epstein-Barr virus EBNA2. Phosphorylation on Ser-751 by CK2 controls the 5'-excision activity of ERCC1-XPF endonuclease; phosphorylated protein inhibits the excision activity and thus NER. Dephosphorylation reactivates the 5'-excision step. Phosphorylation has no effect on transcription or the 3'-5' helicase activity.

The protein localises to the nucleus. The catalysed reaction is Couples ATP hydrolysis with the unwinding of duplex DNA by translocating in the 3'-5' direction.. It carries out the reaction ATP + H2O = ADP + phosphate + H(+). Its activity is regulated as follows. Phosphorylation on Ser-751 by CK2 controls the 5'-excision activity of ERCC1-XPF endonuclease; phosphorylated protein inhibits the excision activity and thus NER. ATPase activity is stimulated by TFIIH subunit p52 (GTF2H4). DNA translocase activity by this subunit in TFIIH is stimulated by XPA, ERCC5/XPG and XFP plus ERCC1; translocase activity is sensitive to triptolide which targets this enzyme. In terms of biological role, ATP-dependent 3'-5' DNA helicase/translocase. Binds dsDNA rather than ssDNA, unzipping it in a translocase rather than classical helicase activity. Component of the general transcription and DNA repair factor IIH (TFIIH) core complex. When complexed to CDK-activating kinase (CAK), involved in RNA transcription by RNA polymerase II. The ATPase activity of XPB/ERCC3, but not its helicase activity, is required for DNA opening; it may wrap around the damaged DNA wedging it open, causing localized melting that allows XPD/ERCC2 helicase to anchor. In transcription, TFIIH has an essential role in transcription initiation. When the pre-initiation complex (PIC) has been established, TFIIH is required for promoter opening and promoter escape. The ATP-dependent helicase activity of XPB/ERCC3 is required for promoter opening and promoter escape. In transcription pre-initiation complexes induces and propagates a DNA twist to open DNA. Also involved in transcription-coupled nucleotide excision repair (NER) of damaged DNA. In NER, TFIIH acts by opening DNA around the lesion to allow the excision of the damaged oligonucleotide and its replacement by a new DNA fragment. The structure of the TFIIH transcription complex differs from the NER-TFIIH complex; large movements by XPD/ERCC2 and XPB/ERCC3 are stabilized by XPA. XPA retains XPB/ERCC3 at the 5' end of a DNA bubble (mimicking DNA damage). This is General transcription and DNA repair factor IIH helicase/translocase subunit XPB from Homo sapiens (Human).